A 291-amino-acid polypeptide reads, in one-letter code: MIVLATSEGVKLGRRLAEELDAELAPVEEDRFPDGEQIVRVPPELDGTVVVVHSMSPPQDENLVKAIITLDAARENGAEEVIAIVPYMAYSRQDRRFEPGEPVSFRAVARAVSANADALITVDLHEPGTLKYFDVPAENVSAAEELGKYLAERFEGEDLVVIGPDEGARELAREVASICGVEYDHLEKKRLSGDEVEIHPKELDVEGRTVVLVDDMIDTGGTMVEAARALRDQGAGTLYAACTHALLTRNAATRLLASGFEDIIATDTVPNPFEKVSVAPPVAEAVENLSG.

Residues 34–36 (DGE) and 92–93 (RQ) contribute to the ATP site. The Mg(2+) site is built by His-125 and Asp-165. Lys-188 is a catalytic residue. Residues Arg-190 and Asp-214 each contribute to the D-ribose 5-phosphate site.

This sequence belongs to the ribose-phosphate pyrophosphokinase family. Class III (archaeal) subfamily. Mg(2+) is required as a cofactor.

The protein localises to the cytoplasm. The enzyme catalyses D-ribose 5-phosphate + ATP = 5-phospho-alpha-D-ribose 1-diphosphate + AMP + H(+). It participates in metabolic intermediate biosynthesis; 5-phospho-alpha-D-ribose 1-diphosphate biosynthesis; 5-phospho-alpha-D-ribose 1-diphosphate from D-ribose 5-phosphate (route I): step 1/1. Involved in the biosynthesis of the central metabolite phospho-alpha-D-ribosyl-1-pyrophosphate (PRPP) via the transfer of pyrophosphoryl group from ATP to 1-hydroxyl of ribose-5-phosphate (Rib-5-P). In Methanopyrus kandleri (strain AV19 / DSM 6324 / JCM 9639 / NBRC 100938), this protein is Ribose-phosphate pyrophosphokinase.